The chain runs to 827 residues: DNA ligase (827 aa).

Residues 45–49, 94–95, and glutamate 128 contribute to the NAD(+) site; these read DAAYD and SL. Lysine 130 serves as the catalytic N6-AMP-lysine intermediate. The NAD(+) site is built by arginine 151, glutamate 188, lysine 304, and lysine 328. Zn(2+) contacts are provided by cysteine 451, cysteine 454, cysteine 475, and cysteine 481. The BRCT domain maps to 748 to 827; sequence AAAAAFSGRT…AEWLAMVEAA (80 aa).

The protein belongs to the NAD-dependent DNA ligase family. LigA subfamily. The cofactor is Mg(2+). Requires Mn(2+) as cofactor.

It carries out the reaction NAD(+) + (deoxyribonucleotide)n-3'-hydroxyl + 5'-phospho-(deoxyribonucleotide)m = (deoxyribonucleotide)n+m + AMP + beta-nicotinamide D-nucleotide.. Its function is as follows. DNA ligase that catalyzes the formation of phosphodiester linkages between 5'-phosphoryl and 3'-hydroxyl groups in double-stranded DNA using NAD as a coenzyme and as the energy source for the reaction. It is essential for DNA replication and repair of damaged DNA. The sequence is that of DNA ligase from Methylobacterium sp. (strain 4-46).